We begin with the raw amino-acid sequence, 240 residues long: Tetrahydromethanopterin S-methyltransferase subunit A (240 aa).

Over 1 to 218 (MVDKKEPASG…KFHSGVHAGK (218 aa)) the chain is Cytoplasmic. Histidine 85 contacts 5-hydroxybenzimidazolylcob(I)amide. The helical transmembrane segment at 219 to 239 (IEGAMIGLTVTISLLGLLLLG) threads the bilayer. Position 240 (arginine 240) is a topological domain, extracellular.

This sequence belongs to the MtrA family. In terms of assembly, the complex is composed of 8 subunits; MtrA, MtrB, MtrC, MtrD, MtrE, MtrF, MtrG and MtrH. 5-hydroxybenzimidazolylcob(I)amide is required as a cofactor.

It is found in the cell membrane. It catalyses the reaction 5-methyl-5,6,7,8-tetrahydromethanopterin + coenzyme M + 2 Na(+)(in) = 5,6,7,8-tetrahydromethanopterin + methyl-coenzyme M + 2 Na(+)(out). Its pathway is one-carbon metabolism; methanogenesis from CO(2); methyl-coenzyme M from 5,10-methylene-5,6,7,8-tetrahydromethanopterin: step 2/2. Part of a complex that catalyzes the formation of methyl-coenzyme M and tetrahydromethanopterin from coenzyme M and methyl-tetrahydromethanopterin. This is an energy-conserving, sodium-ion translocating step. The polypeptide is Tetrahydromethanopterin S-methyltransferase subunit A (Methanosarcina acetivorans (strain ATCC 35395 / DSM 2834 / JCM 12185 / C2A)).